The sequence spans 408 residues: Peptidase T (408 aa).

Residue histidine 78 coordinates Zn(2+). Aspartate 80 is an active-site residue. Aspartate 140 provides a ligand contact to Zn(2+). Residue glutamate 173 is the Proton acceptor of the active site. The Zn(2+) site is built by glutamate 174, aspartate 196, and histidine 379.

It belongs to the peptidase M20B family. It depends on Zn(2+) as a cofactor.

It is found in the cytoplasm. It catalyses the reaction Release of the N-terminal residue from a tripeptide.. Its function is as follows. Cleaves the N-terminal amino acid of tripeptides. This chain is Peptidase T, found in Escherichia coli O6:K15:H31 (strain 536 / UPEC).